The following is a 224-amino-acid chain: UPF0502 protein Psyr_2419 (224 aa).

Belongs to the UPF0502 family.

The polypeptide is UPF0502 protein Psyr_2419 (Pseudomonas syringae pv. syringae (strain B728a)).